The following is a 161-amino-acid chain: Nucleotide-binding protein Bphyt_3208 (161 aa).

This sequence belongs to the YajQ family.

Functionally, nucleotide-binding protein. The chain is Nucleotide-binding protein Bphyt_3208 from Paraburkholderia phytofirmans (strain DSM 17436 / LMG 22146 / PsJN) (Burkholderia phytofirmans).